A 57-amino-acid chain; its full sequence is Andropin (57 aa).

Positions 1–23 (MKYFVVLVVLALILAISVGPSDA) are cleaved as a signal peptide.

Belongs to the andropin family. In terms of tissue distribution, ejaculatory duct of adult males.

The protein resides in the secreted. In terms of biological role, male-specific peptide with moderate activity against Gram-positive bacteria. This is Andropin (Anp) from Drosophila melanogaster (Fruit fly).